Consider the following 339-residue polypeptide: Phenylalanine--tRNA ligase alpha subunit (339 aa).

Residue E254 coordinates Mg(2+).

The protein belongs to the class-II aminoacyl-tRNA synthetase family. Phe-tRNA synthetase alpha subunit type 1 subfamily. In terms of assembly, tetramer of two alpha and two beta subunits. The cofactor is Mg(2+).

The protein resides in the cytoplasm. The enzyme catalyses tRNA(Phe) + L-phenylalanine + ATP = L-phenylalanyl-tRNA(Phe) + AMP + diphosphate + H(+). This is Phenylalanine--tRNA ligase alpha subunit from Clostridium kluyveri (strain ATCC 8527 / DSM 555 / NBRC 12016 / NCIMB 10680 / K1).